The primary structure comprises 263 residues: tRNA uridine(34) hydroxylase (263 aa).

The region spanning 129 to 223 (EGREVVTLDT…YFEETDGAFY (95 aa)) is the Rhodanese domain. Cys183 serves as the catalytic Cysteine persulfide intermediate.

Belongs to the TrhO family.

It catalyses the reaction uridine(34) in tRNA + AH2 + O2 = 5-hydroxyuridine(34) in tRNA + A + H2O. Functionally, catalyzes oxygen-dependent 5-hydroxyuridine (ho5U) modification at position 34 in tRNAs. The chain is tRNA uridine(34) hydroxylase from Delftia acidovorans (strain DSM 14801 / SPH-1).